Reading from the N-terminus, the 372-residue chain is Queuine tRNA-ribosyltransferase (372 aa).

Aspartate 89 acts as the Proton acceptor in catalysis. Substrate is bound by residues 89–93 (DSGGF), aspartate 161, and glycine 232. Residues 262–268 (GIGDLPS) are RNA binding. Aspartate 281 acts as the Nucleophile in catalysis. The segment at 286-290 (TKAAR) is RNA binding; important for wobble base 34 recognition. Positions 319, 321, 324, and 351 each coordinate Zn(2+).

The protein belongs to the queuine tRNA-ribosyltransferase family. As to quaternary structure, homodimer. Within each dimer, one monomer is responsible for RNA recognition and catalysis, while the other monomer binds to the replacement base PreQ1. Requires Zn(2+) as cofactor.

It carries out the reaction 7-aminomethyl-7-carbaguanine + guanosine(34) in tRNA = 7-aminomethyl-7-carbaguanosine(34) in tRNA + guanine. It participates in tRNA modification; tRNA-queuosine biosynthesis. Catalyzes the base-exchange of a guanine (G) residue with the queuine precursor 7-aminomethyl-7-deazaguanine (PreQ1) at position 34 (anticodon wobble position) in tRNAs with GU(N) anticodons (tRNA-Asp, -Asn, -His and -Tyr). Catalysis occurs through a double-displacement mechanism. The nucleophile active site attacks the C1' of nucleotide 34 to detach the guanine base from the RNA, forming a covalent enzyme-RNA intermediate. The proton acceptor active site deprotonates the incoming PreQ1, allowing a nucleophilic attack on the C1' of the ribose to form the product. After dissociation, two additional enzymatic reactions on the tRNA convert PreQ1 to queuine (Q), resulting in the hypermodified nucleoside queuosine (7-(((4,5-cis-dihydroxy-2-cyclopenten-1-yl)amino)methyl)-7-deazaguanosine). The polypeptide is Queuine tRNA-ribosyltransferase (Chlamydia pneumoniae (Chlamydophila pneumoniae)).